A 387-amino-acid chain; its full sequence is Probable nitrate transporter NarT (387 aa).

Transmembrane regions (helical) follow at residues 14 to 34, 45 to 65, 69 to 89, 97 to 117, 137 to 157, 161 to 181, 211 to 231, 246 to 266, 268 to 288, 294 to 314, 330 to 350, and 358 to 378; these read TLSLVAGFMAWSIISPLMPFI, ISVILAIPVILGSVLRVPFGY, IVGAKWVFFWSFIVLLLPIFL, GMLMLSGFFLGIGGAIFSVGV, GVGNIGTAVSSFCAPVLAGAI, NTVRSYLIILSIFAILMFFLG, WYFITFGAFVAFGIFLPNFLV, GIFIALATFLRPVGGVIGDKF, AVQALIIDFVIMIIGALILSL, LFTIGCLAISICAGIGNGLIF, GIVSMMGGLGGFFPPLVITFV, and HLAFFFLAIFGVIALITMIHL.

It belongs to the major facilitator superfamily. Nitrate/nitrite porter (TC 2.A.1.8) family.

The protein localises to the cell membrane. Functionally, probably required for nitrate uptake under anoxic conditions. Also possibly involved in excretion of nitrite produced by the dissimilatory reduction of nitrate. The polypeptide is Probable nitrate transporter NarT (narT) (Staphylococcus epidermidis (strain ATCC 35984 / DSM 28319 / BCRC 17069 / CCUG 31568 / BM 3577 / RP62A)).